Consider the following 180-residue polypeptide: MEQFHATTIFAIHHNGKAAMAGDGQVTFGNAVVMKHTAKKVRRLFQGKVLAGFAGSVADAFTLFEMFEGKLEEFNGNLPRAAVELAKEWRSDKVLRRLEAMLIVMDERHLLLVSGTGEVIEPDDGILAIGSGGNYALAAGRALKQYAGDQLSAKEIAKAALEIAANICVYTNDHIIVEEL.

Thr7 is a catalytic residue. Na(+) is bound by residues Ala165, Cys168, and Thr171.

The protein belongs to the peptidase T1B family. HslV subfamily. A double ring-shaped homohexamer of HslV is capped on each side by a ring-shaped HslU homohexamer. The assembly of the HslU/HslV complex is dependent on binding of ATP.

It localises to the cytoplasm. The catalysed reaction is ATP-dependent cleavage of peptide bonds with broad specificity.. Allosterically activated by HslU binding. In terms of biological role, protease subunit of a proteasome-like degradation complex believed to be a general protein degrading machinery. This Geobacillus sp. (strain WCH70) protein is ATP-dependent protease subunit HslV.